Consider the following 430-residue polypeptide: Pre-B-cell leukemia transcription factor 2 (430 aa).

The tract at residues 1–52 (MDERLLGPPPPGGGRGGLGLVSGEPGGPGEPPGGGDPGGGSGGVPGGRGKQD) is disordered. The span at 13–48 (GGRGGLGLVSGEPGGPGEPPGGGDPGGGSGGVPGGR) shows a compositional bias: gly residues. In terms of domain architecture, PBC spans 48–243 (RGKQDIGDIL…VMILRSRFLD (196 aa)). Residues 55–134 (DILQQIMTIT…EGVAGPEKGG (80 aa)) are PBC-A. Phosphoserine occurs at positions 136, 151, and 159. Residues 137-243 (AAAAAAAAAS…VMILRSRFLD (107 aa)) form a PBC-B region. Positions 244 to 306 (ARRKRRNFSK…NKRIRYKKNI (63 aa)) form a DNA-binding region, homeobox; TALE-type. 2 disordered regions span residues 326–347 (QGGHSRTSSPTPPSSAGSGGSF) and 378–430 (SMGP…DTSN). At Ser-330 the chain carries Phosphoserine. The span at 380 to 392 (GPGGYGDNLGGGQ) shows a compositional bias: gly residues. Ser-395 carries the post-translational modification Phosphoserine. Residues 403 to 418 (GSWQEAVTPSSVTSPT) show a composition bias toward polar residues.

Belongs to the TALE/PBX homeobox family. In terms of assembly, forms heterodimers with MEIS1 and heterotrimers with MEIS1 and HOXA9. Interacts with PBXIP1. As to expression, ubiquitously expressed.

Its subcellular location is the nucleus. Transcriptional activator that binds the sequence 5'-ATCAATCAA-3'. Activates transcription of PF4 in complex with MEIS1. The protein is Pre-B-cell leukemia transcription factor 2 (PBX2) of Homo sapiens (Human).